The sequence spans 506 residues: MTKYARPGTADAIMSFQSRYDNWIGNEWVAPVKGQYFENPTPVTGQNFCDVARSTAEDIELALDAAHAAAPAWGKTSVAERAIILNKIADRMEENLESIALAESWDNGKPIRETLNADIPLAIDHFRYFAGAIRAQEGSLSEINSDTVAYHFHEPLGVVGQIIPWNFPILMAVWKLAPALAAGNAIVLKPAEQTPVSILHLIGIIGDLLPAGVLNIVNGFGVEAGKPLASSPRIKKIAFTGETTTGRLIMQYASQNLIPVTLELGGKSPNVFFSDVLASNDDYQDKALEGFTMFALNQGEVCTAPSRALIQEDIFDEFLAMAAIRTKAVRQGDPLDTDTMIGAQASNDQLEKILSYIEIGKAEGAKVITGGERAELGGDLSGGYYVQPTVFTGNNKMRIFQEIFGPVVSVTSFKDYDEAIEIANDTLYGLGAGVWSRDGGVAYRAGRDIQAGRVWTNTYHQYPAHAAFGGYKQSGIGRENHLMMLSHYQQTKNLLVSYAQKAQGFF.

Residue glycine 219–glycine 225 participates in NAD(+) binding. Active-site residues include glutamate 263 and cysteine 302.

The protein belongs to the aldehyde dehydrogenase family.

It catalyses the reaction an aldehyde + NAD(+) + H2O = a carboxylate + NADH + 2 H(+). Degrades all aldehydes potentially generated by N dealkylation of thiocarbamates and may also participate in ethanolamine metabolism and further assimilation of degradation products by thiocarbamate-induced cytochrome P-450. This Rhodococcus erythropolis (Arthrobacter picolinophilus) protein is EPTC-inducible aldehyde dehydrogenase (thcA).